Here is a 325-residue protein sequence, read N- to C-terminus: tRNA dimethylallyltransferase (325 aa).

16–23 serves as a coordination point for ATP; it reads GPTASGKT. Position 18 to 23 (18 to 23) interacts with substrate; it reads TASGKT. Interaction with substrate tRNA stretches follow at residues 41-44, 165-169, 253-258, and 286-293; these read DSAL, QRIQR, RCVGYR, and KRQITWLR.

Belongs to the IPP transferase family. In terms of assembly, monomer. Requires Mg(2+) as cofactor.

The enzyme catalyses adenosine(37) in tRNA + dimethylallyl diphosphate = N(6)-dimethylallyladenosine(37) in tRNA + diphosphate. In terms of biological role, catalyzes the transfer of a dimethylallyl group onto the adenine at position 37 in tRNAs that read codons beginning with uridine, leading to the formation of N6-(dimethylallyl)adenosine (i(6)A). The polypeptide is tRNA dimethylallyltransferase (Ralstonia pickettii (strain 12J)).